The following is a 150-amino-acid chain: Sulfur-rich protein, serovars L1/L3 (150 aa).

Positions 1–20 (MSTVPVVQGAGSSNSAQDIS) are disordered. Transmembrane regions (helical) follow at residues 43-63 (VGLV…VSAA) and 69-89 (IYLA…ILSM).

It localises to the membrane. In Chlamydia trachomatis, this protein is Sulfur-rich protein, serovars L1/L3 (srp).